A 115-amino-acid polypeptide reads, in one-letter code: Large ribosomal subunit protein bL21 (115 aa).

The protein belongs to the bacterial ribosomal protein bL21 family. In terms of assembly, part of the 50S ribosomal subunit. Contacts protein L20.

In terms of biological role, this protein binds to 23S rRNA in the presence of protein L20. This is Large ribosomal subunit protein bL21 from Coxiella burnetii (strain Dugway 5J108-111).